Reading from the N-terminus, the 321-residue chain is tRNA U34 carboxymethyltransferase (321 aa).

Residues lysine 90, tryptophan 104, lysine 109, glycine 129, 151-153 (DPT), 180-181 (IE), methionine 195, tyrosine 199, and arginine 314 each bind carboxy-S-adenosyl-L-methionine.

It belongs to the class I-like SAM-binding methyltransferase superfamily. CmoB family. As to quaternary structure, homotetramer.

The enzyme catalyses carboxy-S-adenosyl-L-methionine + 5-hydroxyuridine(34) in tRNA = 5-carboxymethoxyuridine(34) in tRNA + S-adenosyl-L-homocysteine + H(+). In terms of biological role, catalyzes carboxymethyl transfer from carboxy-S-adenosyl-L-methionine (Cx-SAM) to 5-hydroxyuridine (ho5U) to form 5-carboxymethoxyuridine (cmo5U) at position 34 in tRNAs. This chain is tRNA U34 carboxymethyltransferase, found in Actinobacillus succinogenes (strain ATCC 55618 / DSM 22257 / CCUG 43843 / 130Z).